The following is a 921-amino-acid chain: Isoleucine--tRNA ligase (921 aa).

The 'HIGH' region motif lies at 57–67 (PYANGELHMGH). L-isoleucyl-5'-AMP is bound at residue Glu552. A 'KMSKS' region motif is present at residues 593–597 (KMSKS). Residue Lys596 coordinates ATP. Residues Cys888, Cys891, Cys908, and Cys911 each coordinate Zn(2+).

Belongs to the class-I aminoacyl-tRNA synthetase family. IleS type 1 subfamily. As to quaternary structure, monomer. Requires Zn(2+) as cofactor.

It localises to the cytoplasm. It carries out the reaction tRNA(Ile) + L-isoleucine + ATP = L-isoleucyl-tRNA(Ile) + AMP + diphosphate. Catalyzes the attachment of isoleucine to tRNA(Ile). As IleRS can inadvertently accommodate and process structurally similar amino acids such as valine, to avoid such errors it has two additional distinct tRNA(Ile)-dependent editing activities. One activity is designated as 'pretransfer' editing and involves the hydrolysis of activated Val-AMP. The other activity is designated 'posttransfer' editing and involves deacylation of mischarged Val-tRNA(Ile). The chain is Isoleucine--tRNA ligase from Listeria monocytogenes serovar 1/2a (strain ATCC BAA-679 / EGD-e).